Reading from the N-terminus, the 206-residue chain is Uracil phosphoribosyltransferase (206 aa).

5-phospho-alpha-D-ribose 1-diphosphate-binding positions include R76, R101, and 128-136; that span reads DPMLATGTT. Uracil-binding positions include I191 and 196–198; that span reads GDA. D197 serves as a coordination point for 5-phospho-alpha-D-ribose 1-diphosphate.

This sequence belongs to the UPRTase family. The cofactor is Mg(2+).

It catalyses the reaction UMP + diphosphate = 5-phospho-alpha-D-ribose 1-diphosphate + uracil. It participates in pyrimidine metabolism; UMP biosynthesis via salvage pathway; UMP from uracil: step 1/1. Its activity is regulated as follows. Allosterically activated by GTP. Catalyzes the conversion of uracil and 5-phospho-alpha-D-ribose 1-diphosphate (PRPP) to UMP and diphosphate. The sequence is that of Uracil phosphoribosyltransferase from Mycoplasma genitalium (strain ATCC 33530 / DSM 19775 / NCTC 10195 / G37) (Mycoplasmoides genitalium).